We begin with the raw amino-acid sequence, 363 residues long: Lipoyl synthase (363 aa).

Residues C55, C60, C66, C81, C85, C88, and S292 each contribute to the [4Fe-4S] cluster site. The Radical SAM core domain occupies 67-281; sequence WESREATFLI…SKLAKELGFG (215 aa). The tract at residues 338 to 363 is disordered; sequence PSEETPVTTRMAKTPAQSNSVAATIR. A compositionally biased stretch (polar residues) spans 352-363; it reads PAQSNSVAATIR.

This sequence belongs to the radical SAM superfamily. Lipoyl synthase family. It depends on [4Fe-4S] cluster as a cofactor.

Its subcellular location is the cytoplasm. The enzyme catalyses [[Fe-S] cluster scaffold protein carrying a second [4Fe-4S](2+) cluster] + N(6)-octanoyl-L-lysyl-[protein] + 2 oxidized [2Fe-2S]-[ferredoxin] + 2 S-adenosyl-L-methionine + 4 H(+) = [[Fe-S] cluster scaffold protein] + N(6)-[(R)-dihydrolipoyl]-L-lysyl-[protein] + 4 Fe(3+) + 2 hydrogen sulfide + 2 5'-deoxyadenosine + 2 L-methionine + 2 reduced [2Fe-2S]-[ferredoxin]. It functions in the pathway protein modification; protein lipoylation via endogenous pathway; protein N(6)-(lipoyl)lysine from octanoyl-[acyl-carrier-protein]: step 2/2. Its function is as follows. Catalyzes the radical-mediated insertion of two sulfur atoms into the C-6 and C-8 positions of the octanoyl moiety bound to the lipoyl domains of lipoate-dependent enzymes, thereby converting the octanoylated domains into lipoylated derivatives. The polypeptide is Lipoyl synthase (Corynebacterium aurimucosum (strain ATCC 700975 / DSM 44827 / CIP 107346 / CN-1) (Corynebacterium nigricans)).